The primary structure comprises 408 residues: 5-hydroxytryptamine receptor 1A (408 aa).

Residues 1–32 (MDASNNTTSWNILQRGRMGPSWRRCPVSYQII) lie on the Extracellular side of the membrane. N5 and N6 each carry an N-linked (GlcNAc...) asparagine glycan. A helical membrane pass occupies residues 33–53 (ASLFLGRSFSAGIFGNACVIA). At 54–67 (AIALERSLQNVANY) the chain is on the cytoplasmic side. The chain crosses the membrane as a helical span at residues 68-92 (LIGSLAVTDLMVSVLVLPMAAQNQV). Topologically, residues 93–101 (LNKWTLGQV) are extracellular. The helical transmembrane segment at 102-126 (TCDIFISLDVLCCTSSILHLCAIAL) threads the bilayer. A disulfide bridge connects residues C103 and C181. Positions 110 and 114 each coordinate serotonin. The short motif at 127 to 129 (DRY) is the DRY motif; important for ligand-induced conformation changes element. At 127 to 146 (DRYWAITDPIDYVNKRTPRR) the chain is on the cytoplasmic side. Residues 147 to 168 (AAVLISITWIVGFSISIPPMLG) form a helical membrane-spanning segment. The Extracellular portion of the chain corresponds to 169–187 (WRTPEDRSDPNACRISEDP). The helical transmembrane segment at 188–210 (GYTIYSTFGAFYIPLILMLVLYG) threads the bilayer. Topologically, residues 211-333 (KIFKAARFRI…LARERKTVKT (123 aa)) are cytoplasmic. Residues 235-255 (TCLSVSQQSPKEKQRGAQQEL) are disordered. Residues K332, T333, and G339 each coordinate 1D-myo-inositol 4-phosphate. The helical transmembrane segment at 334–357 (LGIIMGTFILCWLPFFIVALVLPF) threads the bilayer. Topologically, residues 358 to 364 (CETCHMP) are extracellular. A helical transmembrane segment spans residues 365 to 389 (HLLFDIITWLGYSNSLLNPIIYAYF). The NPxxY motif; important for ligand-induced conformation changes and signaling motif lies at 382–386 (NPIIY). 1D-myo-inositol 4-phosphate is bound by residues F389, N390, and K391. Residues 390–408 (NKDFQSAFKKIIKCKFCRQ) lie on the Cytoplasmic side of the membrane.

This sequence belongs to the G-protein coupled receptor 1 family. 5-hydroxytryptamine receptor subfamily. HTR1A sub-subfamily. In terms of tissue distribution, first expressed in the rostral part of the brain stem at stage 22. At later stages of development, expression is localized to serotonergic neurons. The expression pattern changes in the tadpole of stage 41 where, in addition to serotonergic neurons, expression is also localized to the inner nuclear layer (INL) of the developing retina. This expression pattern continues through to the start of metamorphosis (stage 46). In adults, expressed in the brain, in particular the telencephalon, diencephalon and mesencephalon. In the telencephalic region, expression is localized to the lateral, dorsal and medial pallium, and in the striatum, septum and amygdala. In the mesencephalic region, expression is strongest in the optic tectum and torus semicircularis with moderate levels of expression in tegmental nuclei. In diencephalon, localized to the dorsal and ventral thalamus and the preoptic area of the hypothalamus.

The protein resides in the cell membrane. Its activity is regulated as follows. G-protein coupled receptor activity is regulated by lipids: phosphatidylinositol 4-phosphate increases HTR1A-mediated activity. Its function is as follows. G-protein coupled receptor for 5-hydroxytryptamine (serotonin). Also functions as a receptor for various drugs and psychoactive substances. Ligand binding causes a conformation change that triggers signaling via guanine nucleotide-binding proteins (G proteins) and modulates the activity of downstream effectors, such as adenylate cyclase. HTR1A is coupled to G(i)/G(o) G alpha proteins and mediates inhibitory neurotransmission: signaling inhibits adenylate cyclase activity and activates a phosphatidylinositol-calcium second messenger system that regulates the release of Ca(2+) ions from intracellular stores. Beta-arrestin family members regulate signaling by mediating both receptor desensitization and resensitization processes. Activation of the receptor may play a role in the exit from G0 phase and in promoting DNA synthesis. The sequence is that of 5-hydroxytryptamine receptor 1A from Xenopus laevis (African clawed frog).